The primary structure comprises 88 residues: Toxin RelE2 (88 aa).

Belongs to the RelE toxin family.

Toxic component of a type II toxin-antitoxin (TA) system. Its toxic effect is neutralized by coexpression with cognate antitoxin RelB2 but no other ParD or RelB antitoxin. This Caulobacter vibrioides (strain ATCC 19089 / CIP 103742 / CB 15) (Caulobacter crescentus) protein is Toxin RelE2 (relE2).